The following is an 893-amino-acid chain: Exocyst complex component 4 (893 aa).

Residues 1–27 (MNENGATPVAAARRHRPLPAERATSNS) form a disordered region.

Belongs to the SEC8 family. The exocyst complex is composed of sec-3/exoc1, sec-5/exoc2, sec-6/exoc3, sec-8/exoc4, sec-10/exoc5, sec-15/exoc6, exo-70/exoc7 and exo-84/exoc8. In terms of tissue distribution, pseudocoelom.

In terms of biological role, component of the exocyst complex involved in the docking of exocytic vesicles with fusion sites on the plasma membrane. This Caenorhabditis elegans protein is Exocyst complex component 4 (sec-8).